We begin with the raw amino-acid sequence, 156 residues long: 3-hydroxyacyl-[acyl-carrier-protein] dehydratase FabZ (156 aa).

Residue H61 is part of the active site.

This sequence belongs to the thioester dehydratase family. FabZ subfamily.

It is found in the cytoplasm. It carries out the reaction a (3R)-hydroxyacyl-[ACP] = a (2E)-enoyl-[ACP] + H2O. Functionally, involved in unsaturated fatty acids biosynthesis. Catalyzes the dehydration of short chain beta-hydroxyacyl-ACPs and long chain saturated and unsaturated beta-hydroxyacyl-ACPs. In Acaryochloris marina (strain MBIC 11017), this protein is 3-hydroxyacyl-[acyl-carrier-protein] dehydratase FabZ.